We begin with the raw amino-acid sequence, 354 residues long: Homer protein homolog 1 (354 aa).

Positions 1-110 constitute a WH1 domain; that stretch reads MGEQPIFSTR…EKFQEFKEAA (110 aa). N-acetylglycine is present on Gly-2. The interval 114–173 is disordered; sequence KEKSQEKMELTSTPSQESAGGDLQSPLTPESINGTDDERTPDVTQNSEPRAEPTQNALPF. 2 stretches are compositionally biased toward polar residues: residues 138 to 147 and 155 to 173; these read SPLTPESING and DVTQNSEPRAEPTQNALPF. Residues 181–352 adopt a coiled-coil conformation; sequence KHWEAELATL…LRDNLAKLLE (172 aa). The interval 290–354 is required for tetramerization; it reads KLQEVEIRNK…DNLAKLLECS (65 aa). Ser-306 carries the phosphoserine modification.

The protein belongs to the Homer family. As to quaternary structure, tetramer; this tetrameric structure is critical for forming the high-order complex with SHANK1, which in turn is necessary for the structural and functional integrity of dendritic spines. Interacts with GRM1, GRM5, ITPR1, DNM3, RYR1, RYR2 and SHANK3. Interacts with IFT57 and OPHN1. Isoform 1 encodes a coiled-coil structure that mediates homo- and heteromultimerization. Interacts with SHANK1; forms high-order polymerized complex with a mesh-like network structure, at least composed of SHANK1, HOMER1 and DLGAP1; the complex formation is SHANK1 multimerization dependent. Interacts with NFATC4. Interacts with DAGLA (via PPXXF motif); this interaction is required for the cell membrane localization of DAGLA. Interacts with SRGAP2.

It localises to the cytoplasm. Its subcellular location is the postsynaptic density. The protein localises to the synapse. It is found in the cell projection. The protein resides in the dendritic spine. Its function is as follows. Postsynaptic density scaffolding protein. Binds and cross-links cytoplasmic regions of GRM1, GRM5, ITPR1, DNM3, RYR1, RYR2, SHANK1 and SHANK3. By physically linking GRM1 and GRM5 with ER-associated ITPR1 receptors, it aids the coupling of surface receptors to intracellular calcium release. May also couple GRM1 to PI3 kinase through its interaction with AGAP2. Isoform 1 regulates the trafficking and surface expression of GRM5. Isoform 3 acts as a natural dominant negative, in dynamic competition with constitutively expressed isoform 1 to regulate synaptic metabotropic glutamate function. Isoform 3, may be involved in the structural changes that occur at synapses during long-lasting neuronal plasticity and development. Forms a high-order complex with SHANK1, which in turn is necessary for the structural and functional integrity of dendritic spines. Negatively regulates T cell activation by inhibiting the calcineurin-NFAT pathway. Acts by competing with calcineurin/PPP3CA for NFAT protein binding, hence preventing NFAT activation by PPP3CA. This chain is Homer protein homolog 1, found in Homo sapiens (Human).